The chain runs to 98 residues: Sec-independent protein translocase protein TatA (98 aa).

The chain crosses the membrane as a helical span at residues 1–21 (MGAMSPWHWAIVALVVVILFG). The segment at 43–98 (VKEMQNDNSTPAPTAQSAPPPQSAPAELPVADTTTAPVTPPAPVQPQSQHTEPKSA) is disordered. Residues 66–79 (APAELPVADTTTAP) are compositionally biased toward low complexity.

The protein belongs to the TatA/E family. The Tat system comprises two distinct complexes: a TatABC complex, containing multiple copies of TatA, TatB and TatC subunits, and a separate TatA complex, containing only TatA subunits. Substrates initially bind to the TatABC complex, which probably triggers association of the separate TatA complex to form the active translocon.

The protein resides in the cell membrane. Functionally, part of the twin-arginine translocation (Tat) system that transports large folded proteins containing a characteristic twin-arginine motif in their signal peptide across membranes. TatA could form the protein-conducting channel of the Tat system. This Rhodococcus erythropolis (Arthrobacter picolinophilus) protein is Sec-independent protein translocase protein TatA.